A 769-amino-acid polypeptide reads, in one-letter code: Apoptotic enhancer 1 protein (769 aa).

Disordered stretches follow at residues 69 to 88 (PVRV…SQQY), 265 to 396 (SVEP…LDES), and 451 to 518 (PQLP…RSDD). The span at 275 to 284 (QQQQPSPQMM) shows a compositional bias: low complexity. Basic and acidic residues predominate over residues 285–295 (KSEEFSEKRDL). Residues 339 to 353 (STDPHSNHSSPSTSS) are compositionally biased toward low complexity. Polar residues-rich tracts occupy residues 354-378 (QKAP…TMTR), 453-467 (LPTS…TSET), and 474-491 (NSES…NNLE). ANK repeat units follow at residues 585 to 617 (EGIT…AQDS) and 618 to 652 (DGWT…TLSD). One can recognise an SH3 domain in the interval 684–746 (INTGKVYAAY…PRTYLALYPS (63 aa)).

It belongs to the iASPP family. As to quaternary structure, interacts with cep-1/p53; the interaction inhibits pro-apoptotic activity of cep-1.

It is found in the nucleus. Negetively regulates apoptosis via its interaction with cep-1. The chain is Apoptotic enhancer 1 protein from Caenorhabditis elegans.